Here is a 500-residue protein sequence, read N- to C-terminus: MSYFPWLTILVVLPIFAGSLIFFLPHKGNKVVRWYTISICLLEFLLMTYAFCYHFQLEDPLIQLKEDYKWIDVFDFHWRLGIDGLSLGSILLTGFITTLATLAAWPITRNSRLFYFLMLAMYSGQIGLFSSRDLLLFFIMWELELIPVYLLLSMWGGKRRLYSATKFILYTAGGSIFFLIGVLGMGLYGSNEPGLDLERLINQSYPATLEILLYFGFLIAYAVKLPIIPLHTWLPDTHGEAHYSTCMLLAGILLKMGAYGLIRINMELLPHAHYLFSPWLVIIGAIQIIYAASTSLGQRNFKKRIAYSSVSHMGFIIIGIGSITNIGLNGAILQILSHGFIGATLFFLAGTASDRMRLVYLEELGGISIPMPKIFTMFSSFSMASLALPGMSGFVAELVVFFGLITSPKFLLMPKTLITFVMAIGMILTPIYLLSMLRQMFYGYKLFNVPNANFVDSGPRELFILICIFLPVIGIGIYPDFVLSLSVDRVEALLSNYYPK.

Transmembrane regions (helical) follow at residues 4–24 (FPWL…IFFL), 37–57 (ISIC…HFQL), 87–107 (LGSI…AWPI), 113–130 (LFYF…GLFS), 134–154 (LLLF…LLSM), 167–187 (FILY…GMGL), 211–231 (ILLY…IPLH), 242–262 (HYST…YGLI), 272–292 (AHYL…IYAA), 313–333 (MGFI…GAIL), 334–354 (QILS…TASD), 386–406 (LALP…GLIT), 417–437 (LITF…LSML), and 462–482 (LFIL…PDFV).

It belongs to the complex I subunit 4 family.

The protein resides in the plastid. It is found in the chloroplast thylakoid membrane. The enzyme catalyses a plastoquinone + NADH + (n+1) H(+)(in) = a plastoquinol + NAD(+) + n H(+)(out). The catalysed reaction is a plastoquinone + NADPH + (n+1) H(+)(in) = a plastoquinol + NADP(+) + n H(+)(out). The sequence is that of NAD(P)H-quinone oxidoreductase chain 4, chloroplastic (ndhD) from Triticum aestivum (Wheat).